Here is a 183-residue protein sequence, read N- to C-terminus: uncharacterized protein (183 aa).

This sequence belongs to the asfivirus S183L family.

This is an uncharacterized protein from African swine fever virus (isolate Pig/Kenya/KEN-50/1950) (ASFV).